A 589-amino-acid chain; its full sequence is Sulfite reductase [NADPH] hemoprotein beta-component (589 aa).

Residues Cys443, Cys449, Cys488, and Cys492 each coordinate [4Fe-4S] cluster. Cys492 contacts siroheme.

This sequence belongs to the nitrite and sulfite reductase 4Fe-4S domain family. Alpha(8)-beta(8). The alpha component is a flavoprotein, the beta component is a hemoprotein. Requires siroheme as cofactor. [4Fe-4S] cluster serves as cofactor.

The catalysed reaction is hydrogen sulfide + 3 NADP(+) + 3 H2O = sulfite + 3 NADPH + 4 H(+). It functions in the pathway sulfur metabolism; hydrogen sulfide biosynthesis; hydrogen sulfide from sulfite (NADPH route): step 1/1. Its function is as follows. Component of the sulfite reductase complex that catalyzes the 6-electron reduction of sulfite to sulfide. This is one of several activities required for the biosynthesis of L-cysteine from sulfate. In Neisseria meningitidis serogroup C / serotype 2a (strain ATCC 700532 / DSM 15464 / FAM18), this protein is Sulfite reductase [NADPH] hemoprotein beta-component.